The following is a 368-amino-acid chain: tRNA-specific 2-thiouridylase MnmA (368 aa).

ATP contacts are provided by residues 11-18 (GMSGGVDS) and Met-37. The segment at 97–99 (NPD) is interaction with target base in tRNA. Residue Cys-102 is the Nucleophile of the active site. Cys-102 and Cys-199 form a disulfide bridge. Position 127 (Gly-127) interacts with ATP. The interval 149-151 (KDQ) is interaction with tRNA. The Cysteine persulfide intermediate role is filled by Cys-199. The tract at residues 311 to 312 (RY) is interaction with tRNA.

This sequence belongs to the MnmA/TRMU family. As to quaternary structure, interacts with TusE.

The protein localises to the cytoplasm. It catalyses the reaction S-sulfanyl-L-cysteinyl-[protein] + uridine(34) in tRNA + AH2 + ATP = 2-thiouridine(34) in tRNA + L-cysteinyl-[protein] + A + AMP + diphosphate + H(+). Its function is as follows. Catalyzes the 2-thiolation of uridine at the wobble position (U34) of tRNA(Lys), tRNA(Glu) and tRNA(Gln), leading to the formation of s(2)U34, the first step of tRNA-mnm(5)s(2)U34 synthesis. Sulfur is provided by IscS, via a sulfur-relay system. Binds ATP and its substrate tRNAs. This is tRNA-specific 2-thiouridylase MnmA from Shigella boydii serotype 4 (strain Sb227).